Reading from the N-terminus, the 161-residue chain is Nucleotide-binding protein Geob_0921 (161 aa).

It belongs to the YajQ family.

In terms of biological role, nucleotide-binding protein. The sequence is that of Nucleotide-binding protein Geob_0921 from Geotalea daltonii (strain DSM 22248 / JCM 15807 / FRC-32) (Geobacter daltonii).